A 323-amino-acid chain; its full sequence is C-type lectin domain family 11 member A (323 aa).

An N-terminal signal peptide occupies residues 1–21 (MQAAWLLGALVVPQLLGFGHG). 2 disordered regions span residues 55 to 106 (LGLP…TPED) and 272 to 295 (LGAQ…TLEN). The Cell attachment site signature appears at 61–63 (RGD). Acidic residues predominate over residues 74–90 (EDWEMEEDQGEEEEEEA). Positions 183–320 (LGHKCFLLSR…CQRRLYYVCE (138 aa)) constitute a C-type lectin domain. Intrachain disulfides connect C204-C319 and C296-C311.

O-glycosylated. Probably sulfated on the O-glycans. As to expression, expressed in skeletal tissues including bone marrow, chondrocytes, primary ossification center-associated cells, the perichondrium and periosteum. Lower levels of expression were detected in spleen, thymus, appendix and fetal liver.

It is found in the cytoplasm. It localises to the secreted. Promotes osteogenesis by stimulating the differentiation of mesenchymal progenitors into mature osteoblasts. Important for repair and maintenance of adult bone. This is C-type lectin domain family 11 member A (CLEC11A) from Homo sapiens (Human).